Consider the following 364-residue polypeptide: Medium-wave-sensitive opsin 1 (364 aa).

At 1-52 the chain is on the extracellular side; it reads MAQRWGPHALSGVQAQDAYEDSTQASLFTYTNSNNTRGPFEGPNYHIAPRWV. A required for 11-cis-retinal regeneration region spans residues 17 to 43; the sequence is DAYEDSTQASLFTYTNSNNTRGPFEGP. Asn-34 carries N-linked (GlcNAc...) asparagine glycosylation. The helical transmembrane segment at 53-77 threads the bilayer; that stretch reads YHLTSAWMTIVVIASIFTNGLVLVA. Over 78 to 89 the chain is Cytoplasmic; that stretch reads TMRFKKLRHPLN. The chain crosses the membrane as a helical span at residues 90 to 115; it reads WILVNLAVADLAETVIASTISVVNQV. The Extracellular portion of the chain corresponds to 116 to 129; sequence YGYFVLGHPLCVVE. A disulfide bond links Cys-126 and Cys-203. A helical membrane pass occupies residues 130–149; sequence GYTVSLCGITGLWSLAIISW. At 150 to 168 the chain is on the cytoplasmic side; that stretch reads ERWLVVCKPFGNVRFDAKL. A helical transmembrane segment spans residues 169–192; it reads AIVGIVFSWVWSAVWTAPPIFGWS. The Extracellular segment spans residues 193-218; that stretch reads RYWPYGLKTSCGPDVFSGTSYPGVQS. The helical transmembrane segment at 219–246 threads the bilayer; the sequence is YMMVLMVTCCITPLSIIVLCYLHVWLAI. The Cytoplasmic segment spans residues 247-268; sequence RAVAKQQKESESTQKAEKEVTR. The helical transmembrane segment at 269-292 threads the bilayer; the sequence is MVVVMVLAYCLCWGPYAFFACFAT. The Extracellular segment spans residues 293 to 300; it reads ANPGYSFH. A helical membrane pass occupies residues 301–325; it reads PLVAALPAYFAKSATIYNPIIYVFM. Lys-312 is modified (N6-(retinylidene)lysine). Topologically, residues 326–364 are cytoplasmic; that stretch reads NRQFRNCILQLFGKKVEDSSELSSTSRTEASSVSSVSPA.

This sequence belongs to the G-protein coupled receptor 1 family. Opsin subfamily. Monomer. Homodimer. Homotetramer. In terms of processing, O-glycosylated. Phosphorylated on some or all of the serine and threonine residues present in the C-terminal region. In terms of tissue distribution, expressed in cone photoreceptor cells.

The protein resides in the membrane. Visual pigments are the light-absorbing molecules that mediate vision. They consist of an apoprotein, opsin, covalently linked to cis-retinal. May increase spectral sensitivity in dim light. The protein is Medium-wave-sensitive opsin 1 (OPN1MW) of Cavia porcellus (Guinea pig).